A 906-amino-acid chain; its full sequence is UPF0182 protein CA_C0010 (906 aa).

7 helical membrane-spanning segments follow: residues 7–29 (IVTIILFLLVIVGSFGKVTDFII), 47–69 (LAAILKLMIPIFIIIYTGLWFYY), 96–118 (VAIVIDVIASFFVAYFTSSVYWY), 153–175 (LYGVMLLFLIFMAVLTVILYIVL), 208–230 (FAIISGLIMFLVAVGYAIRSFNL), 250–272 (LVFYVIIIAAAIVSSVVIFTSII), and 279–301 (IFVSIVAILILIIGQSITAEIVQ). Residues 842-862 (NSSNNQSETRTETGGTSTDSS) are compositionally biased toward low complexity. The interval 842-875 (NSSNNQSETRTETGGTSTDSSNNKDKLKQAQDLY) is disordered.

It belongs to the UPF0182 family.

The protein localises to the cell membrane. The sequence is that of UPF0182 protein CA_C0010 from Clostridium acetobutylicum (strain ATCC 824 / DSM 792 / JCM 1419 / IAM 19013 / LMG 5710 / NBRC 13948 / NRRL B-527 / VKM B-1787 / 2291 / W).